Reading from the N-terminus, the 479-residue chain is Anaerobic nitric oxide reductase flavorubredoxin (479 aa).

The zinc metallo-hydrolase stretch occupies residues 30–210 (LRGSSYNSYL…PFSRLVTPKI (181 aa)). 6 residues coordinate Fe cation: His-79, Glu-81, Asp-83, His-147, Asp-166, and His-227. In terms of domain architecture, Flavodoxin-like spans 254–393 (ITIFYDTMSN…LCREHGREIA (140 aa)). Residues 260–264 (TMSNN) and 342–369 (AFGSHGWSGGAVDRLSTRLQDAGFEMSL) each bind FMN. A Rubredoxin-like domain is found at 423–474 (GPRMQCSVCQWIYDPAKGEPMQDVAPGTPWSEVPDNFLCPECSLGKDVFEEL). Residues Cys-428, Cys-431, Cys-461, and Cys-464 each coordinate Fe cation.

It in the N-terminal section; belongs to the zinc metallo-hydrolase group 3 family. In terms of assembly, homotetramer. The cofactor is Fe cation. It depends on FMN as a cofactor.

Its subcellular location is the cytoplasm. It participates in nitrogen metabolism; nitric oxide reduction. Functionally, anaerobic nitric oxide reductase; uses NADH to detoxify nitric oxide (NO), protecting several 4Fe-4S NO-sensitive enzymes. Has at least 2 reductase partners, only one of which (NorW, flavorubredoxin reductase) has been identified. NO probably binds to the di-iron center; electrons enter from the NorW at rubredoxin and are transferred sequentially to the FMN center and the di-iron center. Also able to function as an aerobic oxygen reductase. This Shigella dysenteriae serotype 1 (strain Sd197) protein is Anaerobic nitric oxide reductase flavorubredoxin.